The primary structure comprises 216 residues: 3-isopropylmalate dehydratase small subunit (216 aa).

This sequence belongs to the LeuD family. LeuD type 1 subfamily. In terms of assembly, heterodimer of LeuC and LeuD.

The catalysed reaction is (2R,3S)-3-isopropylmalate = (2S)-2-isopropylmalate. It functions in the pathway amino-acid biosynthesis; L-leucine biosynthesis; L-leucine from 3-methyl-2-oxobutanoate: step 2/4. In terms of biological role, catalyzes the isomerization between 2-isopropylmalate and 3-isopropylmalate, via the formation of 2-isopropylmaleate. This chain is 3-isopropylmalate dehydratase small subunit, found in Methylibium petroleiphilum (strain ATCC BAA-1232 / LMG 22953 / PM1).